A 593-amino-acid polypeptide reads, in one-letter code: Bifunctional purine biosynthesis protein ATIC (593 aa).

In terms of domain architecture, MGS-like spans M1–C147. Residues M1–S199 form an IMP cyclohydrolase region. IMP-binding positions include S13–K15, S35–T38, R65–T68, C102–N103, and D126–I127. K138 acts as the Proton donor/acceptor; for FAICAR cyclization activity in catalysis. The residue at position 200 (K200) is an N6-acetyllysine. The interval K200 to H593 is AICAR formyltransferase. Residues R208 to Y209, H268, G317, D340, N432, and R452 contribute to the 5-amino-1-(5-phospho-beta-D-ribosyl)imidazole-4-carboxamide site. H268 acts as the Proton acceptor; for AICAR formyltransferase activity in catalysis. I453 provides a ligand contact to (6R)-10-formyltetrahydrofolate. Residue F542 participates in 5-amino-1-(5-phospho-beta-D-ribosyl)imidazole-4-carboxamide binding. Residues D547 and S566 to A567 each bind (6R)-10-formyltetrahydrofolate. R589 contributes to the 5-amino-1-(5-phospho-beta-D-ribosyl)imidazole-4-carboxamide binding site.

The protein belongs to the PurH family. Homodimer. Associates with internalized INSR complexes on Golgi/endosomal membranes. Interacts with INSR; ATIC together with PRKAA2/AMPK2 and HACD3/PTPLAD1 is proposed to be part of a signaling network regulating INSR autophosphorylation and endocytosis.

It localises to the cytoplasm. It is found in the cytosol. The enzyme catalyses (6R)-10-formyltetrahydrofolate + 5-amino-1-(5-phospho-beta-D-ribosyl)imidazole-4-carboxamide = 5-formamido-1-(5-phospho-D-ribosyl)imidazole-4-carboxamide + (6S)-5,6,7,8-tetrahydrofolate. It carries out the reaction 10-formyldihydrofolate + 5-amino-1-(5-phospho-beta-D-ribosyl)imidazole-4-carboxamide = 5-formamido-1-(5-phospho-D-ribosyl)imidazole-4-carboxamide + 7,8-dihydrofolate. The catalysed reaction is IMP + H2O = 5-formamido-1-(5-phospho-D-ribosyl)imidazole-4-carboxamide. Its pathway is purine metabolism; IMP biosynthesis via de novo pathway; 5-formamido-1-(5-phospho-D-ribosyl)imidazole-4-carboxamide from 5-amino-1-(5-phospho-D-ribosyl)imidazole-4-carboxamide (10-formyl THF route): step 1/1. It participates in purine metabolism; IMP biosynthesis via de novo pathway; IMP from 5-formamido-1-(5-phospho-D-ribosyl)imidazole-4-carboxamide: step 1/1. Its activity is regulated as follows. AMP and XMP inhibit AICAR formyltransferase activity. AICAR formyltransferase activity is competitively inhibited by 2-[5-hydroxy-3-methyl-1-(2-methyl-4-sulfo-phenyl)-1H-pyrazol-4-ylazo]-4-sulfo-benzoic acid (326203-A). FAICAR cyclization is competitively inhibited by 1,5-dihydroimidazo[4,5-c][1,2,6]thiadiazin-4(3H)-one-2,2-dioxide and the corresponding nucleoside and nucleoside monophosphate. In terms of biological role, bifunctional enzyme that catalyzes the last two steps of purine biosynthesis. Acts as a transformylase that incorporates a formyl group to the AMP analog AICAR (5-amino-1-(5-phospho-beta-D-ribosyl)imidazole-4-carboxamide) to produce the intermediate formyl-AICAR (FAICAR). Can use both 10-formyldihydrofolate and 10-formyltetrahydrofolate as the formyl donor in this reaction. Also catalyzes the cyclization of FAICAR to inosine monophosphate (IMP). Promotes insulin receptor/INSR autophosphorylation and is involved in INSR internalization. The polypeptide is Bifunctional purine biosynthesis protein ATIC (ATIC) (Gallus gallus (Chicken)).